A 623-amino-acid polypeptide reads, in one-letter code: Zinc finger protein 131 (623 aa).

The BTB domain maps to Thr34–Gly98. A Nuclear localization signal 1 motif is present at residues Thr137–Ala148. C2H2-type zinc fingers lie at residues Phe261–His283, Phe288–His311, and His328–His350. Residues Lys289 and Lys295 each participate in a glycyl lysine isopeptide (Lys-Gly) (interchain with G-Cter in SUMO2) cross-link. Positions Val317 to His328 match the Nuclear localization signal 2 motif. Residues Phe356–Gly381 form a C2H2-type 4; degenerate zinc finger. 2 C2H2-type zinc fingers span residues Tyr392–His414 and Asn420–His443. The segment covering Asn573–Thr617 has biased composition (basic and acidic residues). Residues Asn573–Glu623 are disordered. A Glycyl lysine isopeptide (Lys-Gly) (interchain with G-Cter in SUMO) cross-link involves residue Lys601.

Belongs to the krueppel C2H2-type zinc-finger protein family. Post-translationally, monosumoylated at Lys-601 by CBX4 and UHRF2. Sumoylation may potentiate ZNF131 inhibition of estrogen signaling. Sumoylation does not interfere with ubiquitination. Ubiquitinated. In terms of tissue distribution, predominant expression is found in different brain areas such as the occipital and temporal lobe, the nucleus caudatus, hippocampus, and the cerebellum as well as in testis and thymus.

It localises to the nucleus. Functionally, plays a role during development and organogenesis as well as in the function of the adult central nervous system. May be involved in transcriptional regulation as a repressor of ESR1/ER-alpha signaling. In Homo sapiens (Human), this protein is Zinc finger protein 131 (ZNF131).